A 101-amino-acid polypeptide reads, in one-letter code: uncharacterized protein (101 aa).

A helical transmembrane segment spans residues 72-94; it reads ILCPSFLNYSFINIYCFGPYTMV.

It is found in the membrane. This is an uncharacterized protein from Schizosaccharomyces pombe (strain 972 / ATCC 24843) (Fission yeast).